The following is a 137-amino-acid chain: Holo-[acyl-carrier-protein] synthase (137 aa).

D7 and E58 together coordinate Mg(2+).

The protein belongs to the P-Pant transferase superfamily. AcpS family. The cofactor is Mg(2+).

The protein localises to the cytoplasm. It carries out the reaction apo-[ACP] + CoA = holo-[ACP] + adenosine 3',5'-bisphosphate + H(+). Functionally, transfers the 4'-phosphopantetheine moiety from coenzyme A to a Ser of acyl-carrier-protein. This is Holo-[acyl-carrier-protein] synthase from Chloroflexus aurantiacus (strain ATCC 29366 / DSM 635 / J-10-fl).